Consider the following 317-residue polypeptide: Beta-ketoacyl-[acyl-carrier-protein] synthase III (317 aa).

Catalysis depends on residues Cys-112 and His-244. An ACP-binding region spans residues 245–249 (QANLR). Asn-274 is an active-site residue.

The protein belongs to the thiolase-like superfamily. FabH family. Homodimer.

Its subcellular location is the cytoplasm. The enzyme catalyses malonyl-[ACP] + acetyl-CoA + H(+) = 3-oxobutanoyl-[ACP] + CO2 + CoA. It functions in the pathway lipid metabolism; fatty acid biosynthesis. Functionally, catalyzes the condensation reaction of fatty acid synthesis by the addition to an acyl acceptor of two carbons from malonyl-ACP. Catalyzes the first condensation reaction which initiates fatty acid synthesis and may therefore play a role in governing the total rate of fatty acid production. Possesses both acetoacetyl-ACP synthase and acetyl transacylase activities. Its substrate specificity determines the biosynthesis of branched-chain and/or straight-chain of fatty acids. The sequence is that of Beta-ketoacyl-[acyl-carrier-protein] synthase III from Pasteurella multocida (strain Pm70).